The following is a 462-amino-acid chain: Glycine--tRNA ligase (462 aa).

Substrate-binding residues include Arg100 and Glu174. ATP-binding positions include 206 to 208 (RNE), 216 to 221 (FRTREF), 290 to 291 (EL), and 334 to 337 (GADR). Residue 221–225 (FEQME) coordinates substrate. 330 to 334 (EPSLG) serves as a coordination point for substrate.

Belongs to the class-II aminoacyl-tRNA synthetase family. As to quaternary structure, homodimer.

The protein resides in the cytoplasm. The enzyme catalyses tRNA(Gly) + glycine + ATP = glycyl-tRNA(Gly) + AMP + diphosphate. Catalyzes the attachment of glycine to tRNA(Gly). The sequence is that of Glycine--tRNA ligase from Ruminiclostridium cellulolyticum (strain ATCC 35319 / DSM 5812 / JCM 6584 / H10) (Clostridium cellulolyticum).